The chain runs to 361 residues: tRNA/tmRNA (uracil-C(5))-methyltransferase (361 aa).

Positions 185, 213, 218, 234, and 294 each coordinate S-adenosyl-L-methionine. C319 functions as the Nucleophile in the catalytic mechanism. The active-site Proton acceptor is the E353.

The protein belongs to the class I-like SAM-binding methyltransferase superfamily. RNA M5U methyltransferase family. TrmA subfamily.

The catalysed reaction is uridine(54) in tRNA + S-adenosyl-L-methionine = 5-methyluridine(54) in tRNA + S-adenosyl-L-homocysteine + H(+). It catalyses the reaction uridine(341) in tmRNA + S-adenosyl-L-methionine = 5-methyluridine(341) in tmRNA + S-adenosyl-L-homocysteine + H(+). In terms of biological role, dual-specificity methyltransferase that catalyzes the formation of 5-methyluridine at position 54 (m5U54) in all tRNAs, and that of position 341 (m5U341) in tmRNA (transfer-mRNA). The protein is tRNA/tmRNA (uracil-C(5))-methyltransferase of Pseudomonas syringae pv. syringae (strain B728a).